Consider the following 280-residue polypeptide: Chaperone protein DnaJ 2 (280 aa).

The J domain maps to 6-70; that stretch reads DYYAILGVPR…EKRRIYDTYG (65 aa).

This sequence belongs to the DnaJ family. In terms of assembly, forms a heterononamer with DnaJ and DafA in the resting state. Three copies of each protein are present in the complex.

Its subcellular location is the cytoplasm. Functionally, does not influence ATP binding or hydrolysis nor ADP release. Exerts influence on the interaction of DnaK with substrates; in the presence of DafA, DnaJ inhibits substrate binding, and substrate already bound to DnaK is displaced by DnaJ and DafA. The polypeptide is Chaperone protein DnaJ 2 (dnaJ2) (Thermus thermophilus (strain ATCC 27634 / DSM 579 / HB8)).